Reading from the N-terminus, the 636-residue chain is Guanine-nucleotide exchange factor YEL1 (636 aa).

Disordered stretches follow at residues Met1–Lys29 and Arg213–Ser234. The SEC7 domain occupies Met1 to Gln203. Positions Arg333–Ile475 constitute a PH domain.

This sequence belongs to the YEL1 family.

It localises to the cytoplasm. The protein localises to the cell membrane. It is found in the bud neck. Its subcellular location is the bud tip. Its function is as follows. Guanine nucleotide exchange factor for ARF3 required for localization of ARF3 to the bud neck and tip and involved in actin patch polarization. In Lachancea thermotolerans (strain ATCC 56472 / CBS 6340 / NRRL Y-8284) (Yeast), this protein is Guanine-nucleotide exchange factor YEL1 (YEL1).